Consider the following 203-residue polypeptide: MSRYTGPSWKQSRRLGLSLTGTGKELARRNYVPGQHGPNNRSKLSEYGLQLAEKQKLRFSYGMGEKQFRNLFVQATKIKEGTLGFNFMLLLERRLDNVVYRLGLATTRRQARQFVNHGHILVDGKRVDIPSFRVEIGQVISVREKSMKVPAILEAVEATLGRPAFVSFDAEKLEGSLTRLPERDEINPEINEALVVEFYNKML.

The S4 RNA-binding domain occupies arginine 93–valine 156.

The protein belongs to the universal ribosomal protein uS4 family. In terms of assembly, part of the 30S ribosomal subunit. Contacts protein S5. The interaction surface between S4 and S5 is involved in control of translational fidelity.

In terms of biological role, one of the primary rRNA binding proteins, it binds directly to 16S rRNA where it nucleates assembly of the body of the 30S subunit. Functionally, with S5 and S12 plays an important role in translational accuracy. The polypeptide is Small ribosomal subunit protein uS4 (Streptococcus equi subsp. equi (strain 4047)).